A 173-amino-acid polypeptide reads, in one-letter code: Sterile alpha motif domain-containing protein 5 (173 aa).

The SAM domain maps to 1–65; it reads MCTNIVYEWL…LEAVRRLREQ (65 aa). The interval 75-119 is disordered; sequence TLEPQPAPPGPPADAVPTGRRGEPCGGPAQGTRGDSRGHTTAPRS. The span at 79–88 shows a compositional bias: pro residues; that stretch reads QPAPPGPPAD.

In terms of assembly, interacts promiscuously (via SAM domain) with EPHA5, EPHA6, EPHA7, EPHA8, EPHB1, EPHB2, EPHB3 and EPHB4 (via SAM domain) (in vitro). Detected in biliary epithelial cells on bile ducts at the hepatic hilum (at protein level).

The protein localises to the cytoplasm. This is Sterile alpha motif domain-containing protein 5 (SAMD5) from Homo sapiens (Human).